The chain runs to 387 residues: MEDDAPVIYGLEFQARALTAQTAETDAIRFLVGTQSLRYDNQIHVIDFDDENNIINKNVLLHHAGEIWQIGASPADRNVLATCYNKISDSKVMTCAAVWRIPKELQGGNHESPDDTSSNAQSLELLCHLDSTAHGNMACVTWEPLGDGKKLLSLADNYLLIWDLQESSTKSVLSSSATLEGKGQLRFTSGKWSPHHNCTQVATANDTAIRGWDIRSMRQIYCIENAHGQLVRDLDFNPNKQYYLASCGDDCKVKFWDTRNIHEPVKTLEEHSHWVWSVRYNHSHDQLVLTGSSDSRVILSNMVSISSEPFGHLVDDEDLSDQEDNPQEEKTKEPLQDSIIGTYEEHEDSVYAVEWSSADPWLFASLSYDGRLVINRVPRALKYNILL.

WD repeat units follow at residues 132-172 (TAHG…TKSV), 182-222 (KGQL…QIYC), 226-266 (AHGQ…EPVK), and 270-310 (EHSH…SEPF). Residues 311–339 (GHLVDDEDLSDQEDNPQEEKTKEPLQDSI) form a disordered region. Positions 315–326 (DDEDLSDQEDNP) are enriched in acidic residues. Residues 345–385 (EHEDSVYAVEWSSADPWLFASLSYDGRLVINRVPRALKYNI) form a WD 5 repeat.

Belongs to the WD repeat EIPR1 family.

The protein localises to the golgi apparatus. Its subcellular location is the trans-Golgi network. Functionally, may act as a component of endosomal retrieval machinery that is involved in protein transport from early endosomes to either recycling endosomes or the trans-Golgi network. In Xenopus laevis (African clawed frog), this protein is EARP-interacting protein homolog.